Reading from the N-terminus, the 873-residue chain is DNA mismatch repair protein MutS (873 aa).

Residue 601–608 participates in ATP binding; it reads GPNMSGKS.

It belongs to the DNA mismatch repair MutS family.

This protein is involved in the repair of mismatches in DNA. It is possible that it carries out the mismatch recognition step. This protein has a weak ATPase activity. The protein is DNA mismatch repair protein MutS of Staphylococcus epidermidis (strain ATCC 12228 / FDA PCI 1200).